Here is a 251-residue protein sequence, read N- to C-terminus: Pyrroloquinoline-quinone synthase (251 aa).

This sequence belongs to the PqqC family.

The enzyme catalyses 6-(2-amino-2-carboxyethyl)-7,8-dioxo-1,2,3,4,7,8-hexahydroquinoline-2,4-dicarboxylate + 3 O2 = pyrroloquinoline quinone + 2 H2O2 + 2 H2O + H(+). It participates in cofactor biosynthesis; pyrroloquinoline quinone biosynthesis. Its function is as follows. Ring cyclization and eight-electron oxidation of 3a-(2-amino-2-carboxyethyl)-4,5-dioxo-4,5,6,7,8,9-hexahydroquinoline-7,9-dicarboxylic-acid to PQQ. In Klebsiella pneumoniae subsp. pneumoniae (strain ATCC 700721 / MGH 78578), this protein is Pyrroloquinoline-quinone synthase.